The sequence spans 706 residues: mRNA (2'-O-methyladenosine-N(6)-)-methyltransferase (706 aa).

Residues 1-34 form a disordered region; sequence MANENHGSPREGASLLSHSPGTSSQSQPCSPKPV. Residues 16–29 show a composition bias toward polar residues; it reads LSHSPGTSSQSQPC. S30 is subject to Phosphoserine. Residues 43 to 77 form the WW domain; it reads ELVHAGWEKCWSRRESRPYYFNRFTNQSLWEMPVL. A disordered region spans residues 88 to 148; the sequence is GLNATPLPQD…QSVPSSPSIP (61 aa). Positions 109–113 match the Nuclear localization signal motif; it reads KSRKR. At S116 the chain carries Phosphoserine. A compositionally biased stretch (low complexity) spans 132 to 147; it reads IPVTPTSQSVPSSPSI. T152 carries the phosphothreonine modification. R234 and R264 together coordinate substrate. Residue 552–555 participates in S-adenosyl-L-methionine binding; the sequence is NPPF. Substrate-binding positions include E557 and 587–591; that span reads WREPP. Position 613 to 615 (613 to 615) interacts with S-adenosyl-L-methionine; that stretch reads FEH. The interval 663–706 is disordered; the sequence is TAAYKQSGRSHGSSSSSSSSSSSSEAKDRDSGREQGPSREPHPT. Residues 668-686 carry the Nuclear localization signal motif; that stretch reads QSGRSHGSSSSSSSSSSSS. The segment covering 675–686 has biased composition (low complexity); it reads SSSSSSSSSSSS. Over residues 687 to 706 the composition is skewed to basic and acidic residues; that stretch reads EAKDRDSGREQGPSREPHPT.

Belongs to the CAPAM family. Interacts with POLR2A; interacts with the phosphorylated C-terminal domain (CTD) of POLR2A.

It localises to the nucleus. The enzyme catalyses a 5'-end (N(7)-methyl 5'-triphosphoguanosine)-(2'-O-methyladenosine) in mRNA + S-adenosyl-L-methionine = a 5'-end (N(7)-methyl 5'-triphosphoguanosine)-(N(6),2'-O-dimethyladenosine) in mRNA + S-adenosyl-L-homocysteine + H(+). With respect to regulation, cap-specific adenosine methyltransferase activity is inhibited by zinc. Functionally, cap-specific adenosine methyltransferase that catalyzes formation of N(6),2'-O-dimethyladenosine cap (m6A(m)) by methylating the adenosine at the second transcribed position of capped mRNAs. Recruited to the early elongation complex of RNA polymerase II (RNAPII) via interaction with POLR2A and mediates formation of m6A(m) co-transcriptionally. The protein is mRNA (2'-O-methyladenosine-N(6)-)-methyltransferase of Mus musculus (Mouse).